Reading from the N-terminus, the 215-residue chain is LexA repressor (215 aa).

Positions 28 to 48 form a DNA-binding region, H-T-H motif; that stretch reads RAEIAAELGFSSPNAAEEHLR. Catalysis depends on for autocatalytic cleavage activity residues Ser133 and Lys170.

Belongs to the peptidase S24 family. As to quaternary structure, homodimer.

It carries out the reaction Hydrolysis of Ala-|-Gly bond in repressor LexA.. In terms of biological role, represses a number of genes involved in the response to DNA damage (SOS response), including recA and lexA. In the presence of single-stranded DNA, RecA interacts with LexA causing an autocatalytic cleavage which disrupts the DNA-binding part of LexA, leading to derepression of the SOS regulon and eventually DNA repair. This chain is LexA repressor, found in Burkholderia cenocepacia (strain HI2424).